Consider the following 235-residue polypeptide: MKKLEQLYEGKAKKVYKTDVEDVLIVDYKDDATAFNGEKRGTIVGKGVINNRMSNYIMKQLEKEGVPTHYIEELSDRETAVKKVQIVPLEVIIRNVSAGSFAKKLGIEEGRKLLCPTLEFSYKDDSLGDPMINSSYAKALGLATQEEIDTISTYAYKVNEVMIKYFEGIGIELIDFKIEFGRYHDQIILADEISPDTCRLWDIKTHEKLDKDRFRRDLGNVEDAYLEVFKRLGIE.

It belongs to the SAICAR synthetase family.

The catalysed reaction is 5-amino-1-(5-phospho-D-ribosyl)imidazole-4-carboxylate + L-aspartate + ATP = (2S)-2-[5-amino-1-(5-phospho-beta-D-ribosyl)imidazole-4-carboxamido]succinate + ADP + phosphate + 2 H(+). Its pathway is purine metabolism; IMP biosynthesis via de novo pathway; 5-amino-1-(5-phospho-D-ribosyl)imidazole-4-carboxamide from 5-amino-1-(5-phospho-D-ribosyl)imidazole-4-carboxylate: step 1/2. The chain is Phosphoribosylaminoimidazole-succinocarboxamide synthase from Lachnoclostridium phytofermentans (strain ATCC 700394 / DSM 18823 / ISDg) (Clostridium phytofermentans).